A 160-amino-acid chain; its full sequence is General odorant-binding protein 2 (160 aa).

Residues 1-19 (MGYKLLLMYIAIVIDSVIG) form the signal peptide. Intrachain disulfides connect C38–C73, C69–C127, and C116–C136.

It belongs to the PBP/GOBP family. Antenna.

In terms of biological role, present in the aqueous fluid surrounding olfactory sensory dendrites and are thought to aid in the capture and transport of hydrophobic odorants into and through this fluid. This chain is General odorant-binding protein 2, found in Antheraea pernyi (Chinese oak silk moth).